A 142-amino-acid chain; its full sequence is Hemoglobin subunit alpha (142 aa).

Position 1 is an N-acetylserine (S1). The 142-residue stretch at 1–142 (SLSDKDKAVV…LALALSEKYR (142 aa)) folds into the Globin domain. H59 is a binding site for O2. Residue H88 participates in heme b binding.

It belongs to the globin family. Heterotetramer of two alpha chains and two beta chains. As to expression, red blood cells.

In terms of biological role, involved in oxygen transport from gills to the various peripheral tissues. This chain is Hemoglobin subunit alpha (hba), found in Carassius auratus (Goldfish).